The following is a 466-amino-acid chain: Chromosomal replication initiator protein DnaA (466 aa).

The tract at residues M1–A85 is domain I, interacts with DnaA modulators. The tract at residues P82–L122 is disordered. The span at A85–L122 shows a compositional bias: polar residues. A domain II region spans residues A85 to S129. The segment at N130–A346 is domain III, AAA+ region. Residues G174, G176, K177, and T178 each contribute to the ATP site. The tract at residues N347–S466 is domain IV, binds dsDNA.

Belongs to the DnaA family. In terms of assembly, oligomerizes as a right-handed, spiral filament on DNA at oriC.

It is found in the cytoplasm. Plays an essential role in the initiation and regulation of chromosomal replication. ATP-DnaA binds to the origin of replication (oriC) to initiate formation of the DNA replication initiation complex once per cell cycle. Binds the DnaA box (a 9 base pair repeat at the origin) and separates the double-stranded (ds)DNA. Forms a right-handed helical filament on oriC DNA; dsDNA binds to the exterior of the filament while single-stranded (ss)DNA is stabiized in the filament's interior. The ATP-DnaA-oriC complex binds and stabilizes one strand of the AT-rich DNA unwinding element (DUE), permitting loading of DNA polymerase. After initiation quickly degrades to an ADP-DnaA complex that is not apt for DNA replication. Binds acidic phospholipids. The protein is Chromosomal replication initiator protein DnaA of Proteus mirabilis (strain HI4320).